The primary structure comprises 388 residues: MAQTGITAPKGFVASATTAGIKPSGKPDMALVVNQGPEYTAAAVFTRNRVIASPVKVSRENVADGQLKAVLYNAGNANACNGTQGDADARESVNTLATKLGLAPEDIGVCSTGLIGELLPMDKVTAGIEALTAEGALGDNGAAAAQAIMTTDTVDKETVVFADGWTVGAMGKGVGMMAPSLATMLVCLTTDASITPAMARIALAKATAVTFETLDIDGSTSTNDTVFLLASGASGVKPTQDELNDAVFAACSDLAEQMQADAEGVTKRVSVTVTGTTTDEMAINAARTIARDNLFKCAMFGSDPNWGRVLAAVGMADADMDPDHIAVYFNDQAVCLDSTGAPGAREVDLSGADIAVRVDLGAGGEGQATVRTTDLSYSYVEINSAYST.

Threonine 150, lysine 172, threonine 183, glutamate 263, asparagine 383, and threonine 388 together coordinate substrate. Threonine 183 functions as the Nucleophile in the catalytic mechanism.

It belongs to the ArgJ family. In terms of assembly, heterotetramer of two alpha and two beta chains.

It localises to the cytoplasm. The catalysed reaction is N(2)-acetyl-L-ornithine + L-glutamate = N-acetyl-L-glutamate + L-ornithine. It carries out the reaction L-glutamate + acetyl-CoA = N-acetyl-L-glutamate + CoA + H(+). It functions in the pathway amino-acid biosynthesis; L-arginine biosynthesis; L-ornithine and N-acetyl-L-glutamate from L-glutamate and N(2)-acetyl-L-ornithine (cyclic): step 1/1. Its pathway is amino-acid biosynthesis; L-arginine biosynthesis; N(2)-acetyl-L-ornithine from L-glutamate: step 1/4. Functionally, catalyzes two activities which are involved in the cyclic version of arginine biosynthesis: the synthesis of N-acetylglutamate from glutamate and acetyl-CoA as the acetyl donor, and of ornithine by transacetylation between N(2)-acetylornithine and glutamate. This chain is Arginine biosynthesis bifunctional protein ArgJ, found in Corynebacterium efficiens (strain DSM 44549 / YS-314 / AJ 12310 / JCM 11189 / NBRC 100395).